A 102-amino-acid chain; its full sequence is YcgL domain-containing protein MS1047 (102 aa).

The YcgL domain maps to 1-85 (MLCAIYKSKK…KQESLFEQFK (85 aa)).

This is YcgL domain-containing protein MS1047 from Mannheimia succiniciproducens (strain KCTC 0769BP / MBEL55E).